The chain runs to 186 residues: TATA box-binding protein-like 1 (186 aa).

Belongs to the TBP family.

The protein localises to the cytoplasm. Its subcellular location is the nucleus. Functionally, part of a specialized transcription system that mediates the transcription of most ribosomal proteins through the 5'-TCT-3' motif which is a core promoter element at these genes. Seems to also mediate the transcription of NF1. Does not bind the TATA box. Members of the TBP family are differentially required to regulate transcription and development during early embryogenesis. Particularly regulates genes that have a role in catabolism. This is TATA box-binding protein-like 1 (tbpl1) from Xenopus tropicalis (Western clawed frog).